Consider the following 306-residue polypeptide: tRNA dimethylallyltransferase (306 aa).

2–9 (GPTASGKT) serves as a coordination point for ATP. Position 4–9 (4–9 (TASGKT)) interacts with substrate. Interaction with substrate tRNA stretches follow at residues 27–30 (DSVQ) and 152–156 (QRIVR).

The protein belongs to the IPP transferase family. As to quaternary structure, monomer. Mg(2+) is required as a cofactor.

The catalysed reaction is adenosine(37) in tRNA + dimethylallyl diphosphate = N(6)-dimethylallyladenosine(37) in tRNA + diphosphate. Catalyzes the transfer of a dimethylallyl group onto the adenine at position 37 in tRNAs that read codons beginning with uridine, leading to the formation of N6-(dimethylallyl)adenosine (i(6)A). This Magnetococcus marinus (strain ATCC BAA-1437 / JCM 17883 / MC-1) protein is tRNA dimethylallyltransferase.